Consider the following 350-residue polypeptide: Phosphotriesterase-related protein (350 aa).

Residues His-22, His-24, Glu-169, His-201, His-230, and Asp-298 each contribute to the a divalent metal cation site.

Belongs to the metallo-dependent hydrolases superfamily. Phosphotriesterase family. A divalent metal cation serves as cofactor.

In Drosophila ananassae (Fruit fly), this protein is Phosphotriesterase-related protein.